Consider the following 251-residue polypeptide: MNLNSIPAFDDNYIWVLNDEAGRCLIVDPGDAEPVLNAITANNWQPEAIFLTHHHHDHVGGVKELVEKFPQIVVYGPQETQDKGTTQVVKDGETAFVLGHEFSVIATPGHTLGHICYFSKPYLFCGDTLFSGGCGRLFEGTASQMYQSLKKLSALPDDTLVCCAHEYTLSNMKFALSILPHDLSINDYYRKVKELRAKNQITLPVILKNERQINVFLRTEDIDLINVINEETLLQQPEERFAWLRSKKDRF.

His-53, His-55, Asp-57, His-58, His-110, Asp-127, and His-165 together coordinate Zn(2+).

Belongs to the metallo-beta-lactamase superfamily. Glyoxalase II family. As to quaternary structure, monomer. Zn(2+) is required as a cofactor.

It catalyses the reaction an S-(2-hydroxyacyl)glutathione + H2O = a 2-hydroxy carboxylate + glutathione + H(+). It participates in secondary metabolite metabolism; methylglyoxal degradation; (R)-lactate from methylglyoxal: step 2/2. Thiolesterase that catalyzes the hydrolysis of S-D-lactoyl-glutathione to form glutathione and D-lactic acid. The polypeptide is Hydroxyacylglutathione hydrolase (Escherichia coli O9:H4 (strain HS)).